The primary structure comprises 481 residues: Hyaluronidase-4 (481 aa).

The Cytoplasmic segment spans residues 1–11 (MQLLPEGQLRL). Residues 12 to 32 (CVFQPVHLTSGLLILFILKSI) form a helical membrane-spanning segment. Residues 33–455 (SSLKPARLPV…CREMTEASGP (423 aa)) lie on the Extracellular side of the membrane. 5 disulfides stabilise this stretch: Cys59-Cys351, Cys223-Cys237, Cys376-Cys387, Cys381-Cys435, and Cys437-Cys446. N-linked (GlcNAc...) asparagine glycosylation is found at Asn64 and Asn115. Glu147 acts as the Proton donor in catalysis. Asn232 and Asn343 each carry an N-linked (GlcNAc...) asparagine glycan. The helical transmembrane segment at 456-476 (SGLSLSSSSVITLCLLVLAGY) threads the bilayer. Over 477–481 (QSIQL) the chain is Cytoplasmic.

This sequence belongs to the glycosyl hydrolase 56 family.

Its subcellular location is the membrane. It carries out the reaction Random hydrolysis of (1-&gt;4)-linkages between N-acetyl-beta-D-glucosamine and D-glucuronate residues in hyaluronate.. Functionally, endo-hyaluronidase that degrades hyaluronan to smaller oligosaccharide fragments. Also has chondroitin sulfate hydrolase activity, The best substrate being the galactosaminidic linkage in the sequence of a trisulfated tetrasaccharide. The polypeptide is Hyaluronidase-4 (Hyal4) (Mus musculus (Mouse)).